The chain runs to 386 residues: MQSAHRLNNLPPYLFADLDKMVQKEQAKGKEIIKLGIGDPGMKPPEGIIKAATQEMYKGENHGYPAYDGIDKLKHAIKEYYQSRFGVELNPDREILTLIGSKEGIANISQAILNPGDINFIPDPSYPVYKNGTILAGGTPHSMPLKQDNGFIPELESIPQSRLSKGKIVFMNYPNNPTSAVASKDFYSHAVKFCQKNKLLLCNDAAYSEIAFDDYQPQSLLSVPGAKEVAIEFNSLSKTFNMTGWRVGFVVGNEKAISALAKYKTNVDSGVFTPLQLAATHALENRHEYIPDILKAYKERRDLVIEFLEEAGFHVYHPKATFYVWAQVPGNQDSFNFTKSLLTKTGVVVTPGIGFGKHGEGYFRIALTVTKDRLKTAMEKICEYFS.

Residues Tyr-13 and Gly-38 each coordinate substrate. Pyridoxal 5'-phosphate is bound by residues Tyr-67, 101-102 (SK), Tyr-126, Asn-176, Tyr-207, and 235-237 (SLS). Residues Lys-102, Tyr-126, and Asn-176 each contribute to the substrate site. Residue Lys-238 is modified to N6-(pyridoxal phosphate)lysine. Arg-246 contributes to the pyridoxal 5'-phosphate binding site. Position 364 (Arg-364) interacts with substrate.

The protein belongs to the class-I pyridoxal-phosphate-dependent aminotransferase family. LL-diaminopimelate aminotransferase subfamily. Homodimer. Pyridoxal 5'-phosphate is required as a cofactor.

It catalyses the reaction (2S,6S)-2,6-diaminopimelate + 2-oxoglutarate = (S)-2,3,4,5-tetrahydrodipicolinate + L-glutamate + H2O + H(+). The protein operates within amino-acid biosynthesis; L-lysine biosynthesis via DAP pathway; LL-2,6-diaminopimelate from (S)-tetrahydrodipicolinate (aminotransferase route): step 1/1. Its function is as follows. Involved in the synthesis of meso-diaminopimelate (m-DAP or DL-DAP), required for both lysine and peptidoglycan biosynthesis. Catalyzes the direct conversion of tetrahydrodipicolinate to LL-diaminopimelate. In Natranaerobius thermophilus (strain ATCC BAA-1301 / DSM 18059 / JW/NM-WN-LF), this protein is LL-diaminopimelate aminotransferase.